The following is a 570-amino-acid chain: Interleukin-1 receptor accessory protein (570 aa).

The first 20 residues, 1 to 20 (MTLLWCVVSLYFYGILQSDA), serve as a signal peptide directing secretion. Ig-like C2-type domains follow at residues 21-128 (SERC…VAFP), 136-226 (SCFN…FHLT), and 242-350 (PPVI…VKQK). At 21–367 (SERCDDWGLD…VELACGFGAT (347 aa)) the chain is on the extracellular side. 5 disulfides stabilise this stretch: Cys-24–Cys-122, Cys-47–Cys-114, Cys-137–Cys-181, Cys-160–Cys-212, and Cys-266–Cys-332. Asn-57 carries an N-linked (GlcNAc...) asparagine glycan. Residues 69–85 (IWYWTRQDRDLEEPINF) are essential for interaction with PTPRD. N-linked (GlcNAc...) asparagine glycosylation is found at Asn-107, Asn-111, and Asn-118. Asn-196, Asn-209, and Asn-299 each carry an N-linked (GlcNAc...) asparagine glycan. Residues 368–388 (VLLVVILIVVYHVYWLEMVLF) form a helical membrane-spanning segment. Residues 389–570 (YRAHFGTDET…GLSYSSLKNV (182 aa)) are Cytoplasmic-facing. The region spanning 403-546 (KEYDIYVSYA…RFWKQLQVAM (144 aa)) is the TIR domain. Residue Glu-482 is part of the active site. The tract at residues 549 to 570 (KKSPRRSSSDEQGLSYSSLKNV) is disordered. Residue Ser-557 is modified to Phosphoserine. A compositionally biased stretch (polar residues) spans 558-570 (DEQGLSYSSLKNV).

This sequence belongs to the interleukin-1 receptor family. As to quaternary structure, the interleukin-36 receptor complex is a heterodimer of IL1RL2 and IL1RAP; the association is inhibited by IL36RN. The interleukin-1 receptor complex is a heterodimer of IL1R1 and IL1RAP. Associates with IL1R2 to form a non-signaling interleukin-1 receptor complex. Interacts with IL-33-bound IL1RL1 to form the minimal interleukin-33 signaling complex with a 1:1:1 stoichiometry. Interacts with KIT (independently of stimulation with KITLG/SCF). A mast cell-specific KITLG/SCF-induced interleukin-33 signaling complex contains IL1RL1, IL1RAP, KIT and MYD88. Interacts (via the first immunoglobilin domain) with PTPRD (via the third immunoglobilin domain); induces pre- and postsynaptic differentiation of neurons.

The protein localises to the cell membrane. It localises to the secreted. It carries out the reaction NAD(+) + H2O = ADP-D-ribose + nicotinamide + H(+). Functionally, coreceptor for IL1RL2 in the IL-36 signaling system. Coreceptor with IL1R1 in the IL-1 signaling system. Associates with IL1R1 bound to IL1B to form the high affinity interleukin-1 receptor complex which mediates interleukin-1-dependent activation of NF-kappa-B and other pathways. Signaling involves the recruitment of adapter molecules such as TOLLIP, MYD88, and IRAK1 or IRAK2 via the respective TIR domains of the receptor/coreceptor subunits. Recruits TOLLIP to the signaling complex. Does not bind to interleukin-1 alone; binding of IL1RN to IL1R1, prevents its association with IL1R1 to form a signaling complex. The cellular response is modulated through a non-signaling association with the membrane IL1R2 decoy receptor. Coreceptor for IL1RL1 in the IL-33 signaling system. Can bidirectionally induce pre- and postsynaptic differentiation of neurons by trans-synaptically binding to PTPRD. May play a role in IL1B-mediated costimulation of IFNG production from T-helper 1 (Th1) cells. Associates with secreted ligand-bound IL1R2 and increases the affinity of secreted IL1R2 for IL1B; this complex formation may be the dominant mechanism for neutralization of IL1B by secreted/soluble receptors. Enhances the ability of secreted IL1R1 to inhibit IL-33 signaling. The chain is Interleukin-1 receptor accessory protein (IL1RAP) from Macaca mulatta (Rhesus macaque).